A 300-amino-acid chain; its full sequence is Alpha-ketoglutarate-dependent dioxygenase alkB homolog 4 (300 aa).

Residue alanine 2 is modified to N-acetylalanine. In terms of domain architecture, Fe2OG dioxygenase spans 148–272 (PVEQCNLDYS…RVCATFRELS (125 aa)). Fe cation is bound by residues histidine 167, aspartate 169, and histidine 252. Arginine 263 contributes to the 2-oxoglutarate binding site.

The protein belongs to the alkB family. As to quaternary structure, interacts with ZFHX3, MLLT3, MLLT1, HSF4, EP300, TES, EIF3C, MTMR6 and PSMA6. The cofactor is Fe(2+).

The protein localises to the cytoplasm. It is found in the nucleus. It localises to the nucleolus. Its subcellular location is the midbody. It carries out the reaction an N(6)-methyl-2'-deoxyadenosine in DNA + 2-oxoglutarate + O2 = a 2'-deoxyadenosine in DNA + formaldehyde + succinate + CO2. The enzyme catalyses N(6)-methyl-L-lysyl-[protein] + 2-oxoglutarate + O2 = L-lysyl-[protein] + formaldehyde + succinate + CO2. Functionally, dioxygenase that mediates demethylation of actin monomethylated at 'Lys-84' (K84me1), thereby acting as a regulator of actomyosin-processes. Demethylation of actin K84me1 is required for maintaining actomyosin dynamics supporting normal cleavage furrow ingression during cytokinesis and cell migration. In addition to proteins, also demethylates DNA: specifically demethylates DNA methylated on the 6th position of adenine (N(6)-methyladenosine) DNA, thereby regulating Polycomb silencing. The chain is Alpha-ketoglutarate-dependent dioxygenase alkB homolog 4 from Mus musculus (Mouse).